The chain runs to 119 residues: Autophagy-related protein 8C-like (119 aa).

The Phosphatidylethanolamine amidated glycine moiety is linked to residue G117. The propeptide at 118–119 is removed in mature form; the sequence is SF.

It belongs to the ATG8 family. As to quaternary structure, interacts with ATG4. Interacts with the Phytophtora infestans effector PexRD54. Interacts with JOKA2. The C-terminal 2 residues are removed by ATG4 to expose Gly-117 at the C-terminus. The C-terminal Gly is then amidated with phosphatidylethanolamine by an activating system similar to that for ubiquitin. The phosphatidylethanolamine amidated glycine is required for autophagosome formation.

The protein localises to the cytoplasmic vesicle. Its subcellular location is the autophagosome membrane. It is found in the vacuole membrane. The protein resides in the cytoplasm. It localises to the cytoskeleton. In terms of biological role, ubiquitin-like modifier involved in autophagosomes formation. May mediate the delivery of the autophagosomes to the vacuole via the microtubule cytoskeleton. ATG8CL-mediated selective autophagy contributes to defense against the fungal pathogen Phytophtora infestans. The polypeptide is Autophagy-related protein 8C-like (Solanum tuberosum (Potato)).